The sequence spans 263 residues: Methylesterase 4 (263 aa).

S84 (acyl-ester intermediate) is an active-site residue. Catalysis depends on charge relay system residues D213 and H241.

It belongs to the AB hydrolase superfamily. Methylesterase family.

It carries out the reaction methyl salicylate + H2O = salicylate + methanol + H(+). It participates in plant hormone biosynthesis. With respect to regulation, esterase activity is down-regulated by salicylic acid (SA). Methylesterase shown to have carboxylesterase activity and methyl salicylate (MeSA) esterase activity in vitro. The polypeptide is Methylesterase 4 (Arabidopsis thaliana (Mouse-ear cress)).